Consider the following 190-residue polypeptide: MRVIGTVGMPGSGKSEAATVAANAGIPVLVMGDVIRQECRDRGLDPAQHHGRIAQALRDEHGPGAIAHQSLPIIEDHLTDATTVLVDGIRSDVEVTTFRDAFGDDFTLVHVSAPRELRKARIEDRDRPGDTDGEPLDAREDRERGFGMDDAIDLADVRIENTDSLDAFHDAVRDLLAADTPHTEVPDNHD.

8–15 is a binding site for ATP; it reads GMPGSGKS. A disordered region spans residues 120-144; sequence ARIEDRDRPGDTDGEPLDAREDRER.

Belongs to the UPF0200 family.

The chain is UPF0200 protein OE_4442F from Halobacterium salinarum (strain ATCC 29341 / DSM 671 / R1).